The primary structure comprises 359 residues: Peptide chain release factor 1 (359 aa).

Glutamine 233 carries the post-translational modification N5-methylglutamine.

It belongs to the prokaryotic/mitochondrial release factor family. In terms of processing, methylated by PrmC. Methylation increases the termination efficiency of RF1.

It localises to the cytoplasm. Peptide chain release factor 1 directs the termination of translation in response to the peptide chain termination codons UAG and UAA. The chain is Peptide chain release factor 1 from Orientia tsutsugamushi (strain Ikeda) (Rickettsia tsutsugamushi).